Consider the following 346-residue polypeptide: tRNA N6-adenosine threonylcarbamoyltransferase (346 aa).

Residues His-111 and His-115 each coordinate Fe cation. Substrate-binding positions include 134-138, Asp-167, Gly-180, and Asn-279; that span reads LVSGG. Asp-307 contacts Fe cation.

This sequence belongs to the KAE1 / TsaD family. It depends on Fe(2+) as a cofactor.

The protein localises to the cytoplasm. It catalyses the reaction L-threonylcarbamoyladenylate + adenosine(37) in tRNA = N(6)-L-threonylcarbamoyladenosine(37) in tRNA + AMP + H(+). Its function is as follows. Required for the formation of a threonylcarbamoyl group on adenosine at position 37 (t(6)A37) in tRNAs that read codons beginning with adenine. Is involved in the transfer of the threonylcarbamoyl moiety of threonylcarbamoyl-AMP (TC-AMP) to the N6 group of A37, together with TsaE and TsaB. TsaD likely plays a direct catalytic role in this reaction. In Burkholderia lata (strain ATCC 17760 / DSM 23089 / LMG 22485 / NCIMB 9086 / R18194 / 383), this protein is tRNA N6-adenosine threonylcarbamoyltransferase.